The primary structure comprises 212 residues: ATP-dependent Clp protease proteolytic subunit (212 aa).

The active-site Nucleophile is the Ser-112. His-137 is an active-site residue.

It belongs to the peptidase S14 family. In terms of assembly, fourteen ClpP subunits assemble into 2 heptameric rings which stack back to back to give a disk-like structure with a central cavity, resembling the structure of eukaryotic proteasomes.

The protein localises to the cytoplasm. It carries out the reaction Hydrolysis of proteins to small peptides in the presence of ATP and magnesium. alpha-casein is the usual test substrate. In the absence of ATP, only oligopeptides shorter than five residues are hydrolyzed (such as succinyl-Leu-Tyr-|-NHMec, and Leu-Tyr-Leu-|-Tyr-Trp, in which cleavage of the -Tyr-|-Leu- and -Tyr-|-Trp bonds also occurs).. Functionally, cleaves peptides in various proteins in a process that requires ATP hydrolysis. Has a chymotrypsin-like activity. Plays a major role in the degradation of misfolded proteins. The chain is ATP-dependent Clp protease proteolytic subunit from Thiobacillus denitrificans (strain ATCC 25259 / T1).